A 398-amino-acid polypeptide reads, in one-letter code: Acetate kinase (398 aa).

N8 contributes to the Mg(2+) binding site. K15 serves as a coordination point for ATP. Substrate is bound at residue R89. The Proton donor/acceptor role is filled by D146. Residues 206-210 (HIGNG), 283-285 (DMR), and 331-335 (GMGEN) contribute to the ATP site. E383 provides a ligand contact to Mg(2+).

This sequence belongs to the acetokinase family. In terms of assembly, homodimer. Requires Mg(2+) as cofactor. The cofactor is Mn(2+).

The protein resides in the cytoplasm. It catalyses the reaction acetate + ATP = acetyl phosphate + ADP. It functions in the pathway metabolic intermediate biosynthesis; acetyl-CoA biosynthesis; acetyl-CoA from acetate: step 1/2. In terms of biological role, catalyzes the formation of acetyl phosphate from acetate and ATP. Can also catalyze the reverse reaction. The sequence is that of Acetate kinase from Streptococcus pyogenes serotype M6 (strain ATCC BAA-946 / MGAS10394).